Reading from the N-terminus, the 897-residue chain is MNSMNQIETNMQYTYNYEEDEYMTQEEEWDRDLLLDPAWEKQQRKTFTAWCNSHLRKAGTQIENIEEDFRNGLKLMLLLEVISGERLPKPDRGKMRFHKIANVNKALDYIASKGVKLVSIGAEEIVDGNVKMTLGMIWTIILRFAIQDISVEETSAKEGLLLWCQRKTAPYRNVNIQNFHLSWKDGLGLCALIHRHRPDLIDYSKLNKDDPIGNINLAMEIAEKHLDIPKMLDAEDIVNTPKPDERAIMTYVSCFYHAFAGAEQAETAANRICKVLAVNQENERLMEEYERLASELLEWIRRTIPWLENRTPEKTMQAMQKKLEDFRDYRRKHKPPKVQEKCQLEINFNTLQTKLRISNRPAFMPSEGKMVSDIAGAWQRLEQAEKGYEEWLLNEIRRLERLEHLAEKFRQKASTHEQWAYGKEQILLQKDYESASLTEVRAMLRKHEAFESDLAAHQDRVEQIAAIAQELNELDYHDAASVNDRCQKICDQWDSLGTLTQKRREALERTEKLLETIDQLHLEFAKRAAPFNNWMEGAMEDLQDMFIVHSIEEIQSLISAHDQFKATLPEADGERQAILSIQNEVEKVIQSYSMRISASNPYSTVTVEEIRTKWEKVKQLVPQRDQSLQEELARQHANERLRRQFAAQANVIGPWIQTKMEEIARSSIEMTGPLEDQMNQLKQYEQNIINYKHNIDKLEGDHQLIQEALVFDNKHTNYTMEHIRVGWELLLTTIARTINEVETQILTRDAKGITQEQMNDFRASFNHFDRRKNGLMDHDDFRACLISMGYDLGEAEFARIMSLVDPNGQGTVTFQSFIDFMTRETADTDTAEQVIASFRILASDKPYILADELRRELPPEQAQYCIKRMPQYTGPGSVPGALDYTSFSSALYGESDL.

The segment at 1-257 is actin-binding; that stretch reads MNSMNQIETN…IMTYVSCFYH (257 aa). 2 Calponin-homology (CH) domains span residues 41 to 145 and 154 to 260; these read KQQR…LRFA and TSAK…HAFA. Spectrin repeat units follow at residues 284 to 394, 404 to 509, 519 to 630, and 640 to 743; these read RLME…WLLN, HLAE…ALER, QLHL…SLQE, and RLRR…EVET. EF-hand domains are found at residues 756–791 and 792–827; these read EQMN…MGYD and LGEA…ETAD. The Ca(2+) site is built by Asp-769, Asn-773, Asp-780, Asp-805, Asn-807, and Thr-811.

It belongs to the alpha-actinin family. Homodimer; antiparallel. Ubiquitinated by FBXL22, leading to proteasomal degradation.

The protein localises to the cytoplasm. It is found in the myofibril. It localises to the sarcomere. Its subcellular location is the z line. Its function is as follows. F-actin cross-linking protein which is thought to anchor actin to a variety of intracellular structures. This is a bundling protein. In Gallus gallus (Chicken), this protein is Alpha-actinin-2 (ACTN2).